A 310-amino-acid chain; its full sequence is Cytochrome f (310 aa).

A signal peptide spans 1 to 27; the sequence is MRRHLSLFLGSLVIGLALLIAPAASWA. Residues Y28, C48, C51, and H52 each contribute to the heme site. The chain crosses the membrane as a helical span at residues 277-297; it reads IYGLLAFFAAVALAQIMLVLK.

Belongs to the cytochrome f family. In terms of assembly, the 4 large subunits of the cytochrome b6-f complex are cytochrome b6, subunit IV (17 kDa polypeptide, PetD), cytochrome f and the Rieske protein, while the 4 small subunits are PetG, PetL, PetM and PetN. The complex functions as a dimer. It depends on heme as a cofactor.

Its subcellular location is the cellular thylakoid membrane. Functionally, component of the cytochrome b6-f complex, which mediates electron transfer between photosystem II (PSII) and photosystem I (PSI), cyclic electron flow around PSI, and state transitions. This is Cytochrome f from Synechococcus sp. (strain CC9605).